A 1241-amino-acid chain; its full sequence is ATP-dependent helicase/nuclease subunit A (1241 aa).

In terms of domain architecture, UvrD-like helicase ATP-binding spans 12 to 485 (SQWTDDQWKA…IDLAKNFRSR (474 aa)). 33-40 (AAAGSGKT) lines the ATP pocket. A UvrD-like helicase C-terminal domain is found at 505-805 (GEIDYDADAE…RIMTIHKSKG (301 aa)).

This sequence belongs to the helicase family. AddA subfamily. Heterodimer of AddA and AddB/RexB. Mg(2+) is required as a cofactor.

It carries out the reaction Couples ATP hydrolysis with the unwinding of duplex DNA by translocating in the 3'-5' direction.. The enzyme catalyses ATP + H2O = ADP + phosphate + H(+). In terms of biological role, the heterodimer acts as both an ATP-dependent DNA helicase and an ATP-dependent, dual-direction single-stranded exonuclease. Recognizes the chi site generating a DNA molecule suitable for the initiation of homologous recombination. The AddA nuclease domain is required for chi fragment generation; this subunit has the helicase and 3' -&gt; 5' nuclease activities. The polypeptide is ATP-dependent helicase/nuclease subunit A (Bacillus cereus (strain AH187)).